We begin with the raw amino-acid sequence, 375 residues long: 4,4'-diaponeurosporenoate glycosyltransferase (375 aa).

4 helical membrane-spanning segments follow: residues 3-23 (WLSR…ALIF), 164-184 (FYEG…NVFS), 277-297 (IMTA…GLCL), and 330-350 (FSNL…KIFI).

The protein belongs to the glycosyltransferase 2 family. CrtQ subfamily.

The protein localises to the cell membrane. The protein operates within carotenoid biosynthesis; staphyloxanthin biosynthesis; staphyloxanthin from farnesyl diphosphate: step 4/5. Its function is as follows. Catalyzes the glycosylation of 4,4'-diaponeurosporenoate, i.e. the esterification of glucose at the C1'' position with the carboxyl group of 4,4'-diaponeurosporenic acid, to form glycosyl-4,4'-diaponeurosporenoate. This is a step in the biosynthesis of staphyloxanthin, an orange pigment present in most staphylococci strains. This Staphylococcus aureus (strain USA300) protein is 4,4'-diaponeurosporenoate glycosyltransferase (crtQ).